Here is a 233-residue protein sequence, read N- to C-terminus: PEP2-like protein NECHADRAFT_97050 (233 aa).

Belongs to the PEP2 family.

Its function is as follows. May contribute to the ability of the fungus to cause disease on pea plants. The chain is PEP2-like protein NECHADRAFT_97050 from Fusarium vanettenii (strain ATCC MYA-4622 / CBS 123669 / FGSC 9596 / NRRL 45880 / 77-13-4) (Fusarium solani subsp. pisi).